The following is a 778-amino-acid chain: Tubulin polyglutamylase ttll6 (778 aa).

The segment at 1 to 43 (MGTPAERSVSEVCRCEPDPGLEGEGWGSDTHAEPSNTPIPLPV) is disordered. Residues 51–393 (KKKLWINLTN…LGACDRRKIT (343 aa)) enclose the TTL domain. ATP contacts are provided by residues lysine 168, 174–175 (QG), 196–199 (QVYM), and 209–211 (KFD). Glutamine 174 contributes to the a protein binding site. L-glutamate is bound at residue arginine 235. 257-258 (TN) is an ATP binding site. 2 residues coordinate L-glutamate: tyrosine 259 and lysine 277. The Mg(2+) site is built by aspartate 340, glutamate 353, and asparagine 355. A protein is bound at residue histidine 356. The segment at 365-445 (RLDREVKDSL…MGGFRRIFPR (81 aa)) is c-MTBD region. Lysine 371 provides a ligand contact to L-glutamate. Basic and acidic residues-rich tracts occupy residues 402 to 418 (ERLQ…EEPR), 485 to 510 (KQEQ…GEKV), 533 to 542 (SVREETPVSL), and 760 to 778 (LSHD…EHSL). Disordered stretches follow at residues 402–422 (ERLQ…QSQA), 485–542 (KQEQ…PVSL), and 758–778 (PHLS…EHSL).

This sequence belongs to the tubulin--tyrosine ligase family. Mg(2+) is required as a cofactor.

The protein resides in the cytoplasm. Its subcellular location is the cytoskeleton. It is found in the cilium axoneme. It localises to the cilium basal body. It carries out the reaction L-glutamyl-[protein] + L-glutamate + ATP = gamma-L-glutamyl-L-glutamyl-[protein] + ADP + phosphate + H(+). It catalyses the reaction (L-glutamyl)(n)-gamma-L-glutamyl-L-glutamyl-[protein] + L-glutamate + ATP = (L-glutamyl)(n+1)-gamma-L-glutamyl-L-glutamyl-[protein] + ADP + phosphate + H(+). Its function is as follows. Polyglutamylase which modifies both tubulin and non-tubulin proteins, generating alpha-linked polyglutamate side chains on the gamma-carboxyl group of specific glutamate residues of target proteins. Preferentially mediates ATP-dependent long polyglutamate chain elongation over the initiation step of the polyglutamylation reaction. Preferentially modifies the alpha-tubulin tail over a beta-tail. Mediates microtubule polyglutamylation in cilia axoneme, which is important for ciliary structural formation and motility. Polyglutamylates olfactory cilia, necessary for the regulation of ciliary structure and beating. This chain is Tubulin polyglutamylase ttll6, found in Danio rerio (Zebrafish).